The sequence spans 62 residues: Large ribosomal subunit protein eL24 (62 aa).

Residues Cys6, Cys9, Cys32, and Cys36 each contribute to the Zn(2+) site. Residues 6–36 (CSFCEGTIEPGCGKKYVKKDGSVMHFCSSKC) form a C4-type zinc finger.

Belongs to the eukaryotic ribosomal protein eL24 family. Part of the 50S ribosomal subunit. Forms a cluster with proteins L3 and L14. It depends on Zn(2+) as a cofactor.

Functionally, binds to the 23S rRNA. This chain is Large ribosomal subunit protein eL24, found in Methanococcus maripaludis (strain C7 / ATCC BAA-1331).